Consider the following 361-residue polypeptide: tRNA-specific 2-thiouridylase MnmA (361 aa).

ATP contacts are provided by residues 6-13 (AMSGGVDS) and leucine 32. The active-site Nucleophile is cysteine 101. Cysteine 101 and cysteine 194 are joined by a disulfide. Position 125 (glycine 125) interacts with ATP. The tract at residues 144-146 (KDQ) is interaction with tRNA. The Cysteine persulfide intermediate role is filled by cysteine 194.

The protein belongs to the MnmA/TRMU family.

The protein localises to the cytoplasm. The catalysed reaction is S-sulfanyl-L-cysteinyl-[protein] + uridine(34) in tRNA + AH2 + ATP = 2-thiouridine(34) in tRNA + L-cysteinyl-[protein] + A + AMP + diphosphate + H(+). Its function is as follows. Catalyzes the 2-thiolation of uridine at the wobble position (U34) of tRNA, leading to the formation of s(2)U34. In Corynebacterium aurimucosum (strain ATCC 700975 / DSM 44827 / CIP 107346 / CN-1) (Corynebacterium nigricans), this protein is tRNA-specific 2-thiouridylase MnmA.